We begin with the raw amino-acid sequence, 72 residues long: MAKSDVIEVEGKVTETLPNAMFRVELENGHEILAHVSGKIRMHYIRILPGDRVTVEMSPYDLSKGRITYRFK.

The 72-residue stretch at 1 to 72 (MAKSDVIEVE…SKGRITYRFK (72 aa)) folds into the S1-like domain.

This sequence belongs to the IF-1 family. As to quaternary structure, component of the 30S ribosomal translation pre-initiation complex which assembles on the 30S ribosome in the order IF-2 and IF-3, IF-1 and N-formylmethionyl-tRNA(fMet); mRNA recruitment can occur at any time during PIC assembly.

It localises to the cytoplasm. One of the essential components for the initiation of protein synthesis. Stabilizes the binding of IF-2 and IF-3 on the 30S subunit to which N-formylmethionyl-tRNA(fMet) subsequently binds. Helps modulate mRNA selection, yielding the 30S pre-initiation complex (PIC). Upon addition of the 50S ribosomal subunit IF-1, IF-2 and IF-3 are released leaving the mature 70S translation initiation complex. The chain is Translation initiation factor IF-1 from Levilactobacillus brevis (strain ATCC 367 / BCRC 12310 / CIP 105137 / JCM 1170 / LMG 11437 / NCIMB 947 / NCTC 947) (Lactobacillus brevis).